The chain runs to 134 residues: Protein LctB (134 aa).

This is Protein LctB (lctB) from Bacillus caldotenax.